The primary structure comprises 418 residues: AP-3 complex subunit mu-2 (418 aa).

The MHD domain maps to 176-417; that stretch reads NNEAYFDVVE…MTKAGKFQVR (242 aa).

Belongs to the adaptor complexes medium subunit family. In terms of assembly, adaptor protein complex 3 (AP-3) is a heterotetramer composed of two large adaptins (delta-type subunit AP3D1 and beta-type subunit AP3B1 or AP3B2), a medium adaptin (mu-type subunit AP3M1 or AP3M2) and a small adaptin (sigma-type subunit APS1 or AP3S2). AP-3 associates with the BLOC-1 complex.

The protein localises to the golgi apparatus. Its subcellular location is the cytoplasmic vesicle membrane. Component of the adaptor complexes which link clathrin to receptors in coated vesicles. Clathrin-associated protein complexes are believed to interact with the cytoplasmic tails of membrane proteins, leading to their selection and concentration. Ap47 is a subunit of the plasma membrane adaptor. In concert with the BLOC-1 complex, AP-3 is required to target cargos into vesicles assembled at cell bodies for delivery into neurites and nerve terminals. The chain is AP-3 complex subunit mu-2 (Ap3m2) from Rattus norvegicus (Rat).